We begin with the raw amino-acid sequence, 952 residues long: Inter-alpha-trypsin inhibitor heavy chain H5 (952 aa).

The signal sequence occupies residues 1 to 17 (MLLLLGLCLGLPLFSES). Residues 35-161 (VPRQLRLLQR…KAAFFLSYEE (127 aa)) enclose the VIT domain. Residues Asn-97, Asn-127, Asn-136, and Asn-231 are each glycosylated (N-linked (GlcNAc...) asparagine). Over residues 113-131 (QKDKKSSESVKDKRNRTSD) the composition is skewed to basic and acidic residues. Residues 113 to 138 (QKDKKSSESVKDKRNRTSDDNEENGS) are disordered. The 184-residue stretch at 295 to 478 (NVVFVLDISA…AQLIGFYDEI (184 aa)) folds into the VWFA domain. N-linked (GlcNAc...) asparagine glycans are attached at residues Asn-508, Asn-776, Asn-795, and Asn-862. A disordered region spans residues 933–952 (ALGLSTPRKPETDRPHEESV). The segment covering 940 to 952 (RKPETDRPHEESV) has biased composition (basic and acidic residues).

Belongs to the ITIH family.

It localises to the secreted. Its function is as follows. May act as a tumor suppressor. This is Inter-alpha-trypsin inhibitor heavy chain H5 (Itih5) from Mus musculus (Mouse).